A 600-amino-acid polypeptide reads, in one-letter code: Kelch-like protein 24 (600 aa).

Residues 66–133 form the BTB domain; the sequence is TDVIICVEGK…VYTGKVKITT (68 aa). The region spanning 168-270 is the BACK domain; that stretch reads CLGIQRFADT…HPNYFVQTVE (103 aa). 6 Kelch repeats span residues 314 to 363, 365 to 407, 408 to 454, 456 to 502, 504 to 544, and 546 to 592; these read VIVV…ALRN, ILVS…VLLG, KVYV…SCIG, LFVI…SLNN, IYVA…VCNG, and IYIL…TIHR.

As to quaternary structure, forms homodimers. Interacts with GRIK2. Component of the BCR(KLHL24) E3 ubiquitin ligase complex, composed of CUL3, RBX1 and KLHL24. Interacts with CUL3. Interacts with KRT14. In terms of processing, autoubiquitinated. Autoubiquitination leads to proteasomal degradation and is necessary to control KLHL24 levels. Expressed in the brain.

The protein localises to the perikaryon. It is found in the cell projection. Its subcellular location is the axon. The protein resides in the cytoplasm. It localises to the cell junction. The protein localises to the desmosome. It is found in the adherens junction. Controls KRT14 levels during keratinocytes differentiation. As part of the BCR(KLHL24) E3 ubiquitin ligase complex, mediates ubiquitination of KRT14. Specifically reduces kainate receptor-mediated currents in hippocampal neurons, most probably by modulating channel properties. Has a crucial role in cardiac development and function. This chain is Kelch-like protein 24 (Klhl24), found in Mus musculus (Mouse).